The sequence spans 597 residues: Probable translation initiation factor IF-2 (597 aa).

Residues 13 to 229 (LRTPIVCVMG…LLGLAQKFLE (217 aa)) form the tr-type G domain. Residues 22 to 29 (GHVDHGKT) are G1. 22 to 29 (GHVDHGKT) serves as a coordination point for GTP. Residues 47–51 (AITQH) are G2. A G3 region spans residues 84 to 87 (DTPG). GTP-binding positions include 84–88 (DTPGH) and 138–141 (NKID). The interval 138–141 (NKID) is G4. The segment at 206-208 (SAV) is G5.

This sequence belongs to the TRAFAC class translation factor GTPase superfamily. Classic translation factor GTPase family. IF-2 subfamily.

Function in general translation initiation by promoting the binding of the formylmethionine-tRNA to ribosomes. Seems to function along with eIF-2. This Methanosarcina acetivorans (strain ATCC 35395 / DSM 2834 / JCM 12185 / C2A) protein is Probable translation initiation factor IF-2.